The sequence spans 359 residues: 1-deoxy-D-xylulose 5-phosphate reductoisomerase (359 aa).

The NADPH site is built by Thr-12, Gly-13, Ser-14, Ile-15, Lys-38, and Asn-39. Lys-105 is a binding site for 1-deoxy-D-xylulose 5-phosphate. Glu-106 provides a ligand contact to NADPH. Mn(2+) is bound at residue Asp-130. Residues Ser-131, Glu-132, Ser-152, and His-175 each coordinate 1-deoxy-D-xylulose 5-phosphate. Glu-132 contacts Mn(2+). NADPH is bound at residue Gly-181. Residues Ser-188, Asn-193, Lys-194, and Glu-197 each contribute to the 1-deoxy-D-xylulose 5-phosphate site. Residue Glu-197 coordinates Mn(2+).

The protein belongs to the DXR family. Mg(2+) is required as a cofactor. The cofactor is Mn(2+).

It catalyses the reaction 2-C-methyl-D-erythritol 4-phosphate + NADP(+) = 1-deoxy-D-xylulose 5-phosphate + NADPH + H(+). It functions in the pathway isoprenoid biosynthesis; isopentenyl diphosphate biosynthesis via DXP pathway; isopentenyl diphosphate from 1-deoxy-D-xylulose 5-phosphate: step 1/6. Catalyzes the NADPH-dependent rearrangement and reduction of 1-deoxy-D-xylulose-5-phosphate (DXP) to 2-C-methyl-D-erythritol 4-phosphate (MEP). This is 1-deoxy-D-xylulose 5-phosphate reductoisomerase from Pseudothermotoga lettingae (strain ATCC BAA-301 / DSM 14385 / NBRC 107922 / TMO) (Thermotoga lettingae).